The following is a 545-amino-acid chain: CTP synthase (545 aa).

An amidoligase domain region spans residues 1–266 (MTTRYIFVTG…DELVIKRFNI (266 aa)). Serine 14 serves as a coordination point for CTP. Serine 14 is a UTP binding site. ATP contacts are provided by residues 15–20 (SLGKGI) and aspartate 72. Positions 72 and 140 each coordinate Mg(2+). CTP is bound by residues 147–149 (DIE), 187–192 (KTKPTQ), and lysine 223. UTP is bound by residues 187-192 (KTKPTQ) and lysine 223. 239 to 241 (KDV) is an ATP binding site. In terms of domain architecture, Glutamine amidotransferase type-1 spans 291–542 (TIGMVGKYIE…IAASLSHQKR (252 aa)). Glycine 352 contacts L-glutamine. Cysteine 379 (nucleophile; for glutamine hydrolysis) is an active-site residue. L-glutamine-binding positions include 380-383 (LGMQ), glutamate 403, and arginine 470. Residues histidine 515 and glutamate 517 contribute to the active site.

It belongs to the CTP synthase family. As to quaternary structure, homotetramer.

The enzyme catalyses UTP + L-glutamine + ATP + H2O = CTP + L-glutamate + ADP + phosphate + 2 H(+). It carries out the reaction L-glutamine + H2O = L-glutamate + NH4(+). The catalysed reaction is UTP + NH4(+) + ATP = CTP + ADP + phosphate + 2 H(+). It functions in the pathway pyrimidine metabolism; CTP biosynthesis via de novo pathway; CTP from UDP: step 2/2. Allosterically activated by GTP, when glutamine is the substrate; GTP has no effect on the reaction when ammonia is the substrate. The allosteric effector GTP functions by stabilizing the protein conformation that binds the tetrahedral intermediate(s) formed during glutamine hydrolysis. Inhibited by the product CTP, via allosteric rather than competitive inhibition. In terms of biological role, catalyzes the ATP-dependent amination of UTP to CTP with either L-glutamine or ammonia as the source of nitrogen. Regulates intracellular CTP levels through interactions with the four ribonucleotide triphosphates. The sequence is that of CTP synthase from Shewanella denitrificans (strain OS217 / ATCC BAA-1090 / DSM 15013).